A 2414-amino-acid polypeptide reads, in one-letter code: Centrosome-associated protein CEP250 (2414 aa).

Coiled-coil stretches lie at residues 91–153 (EEPN…ELVR) and 248–357 (LVAK…VEEE). Disordered regions lie at residues 356 to 384 (EEDT…DPQD), 672 to 707 (AEEA…QETA), 1191 to 1212 (SRPE…DPDQ), 1269 to 1303 (EAQK…QNSL), 2050 to 2071 (AGAR…QERQ), 2194 to 2238 (ALEE…KERL), and 2275 to 2317 (RERR…GSSD). A compositionally biased stretch (polar residues) spans 371-381 (QSDCNGLSQFD). Positions 400 to 1165 (QQAVQDLRQQ…QLEALVAEQQ (766 aa)) form a coiled coil. The span at 684–704 (RGTREEKEELKDKLSEAHHQQ) shows a compositional bias: basic and acidic residues. Coiled coils occupy residues 1237–2200 (LQKL…EQQS) and 2231–2290 (GVEE…ASRA). The span at 1280-1289 (QDLQRQLSQS) shows a compositional bias: low complexity. Residues 2196 to 2209 (EEQQSGGPHSTSRA) show a composition bias toward polar residues. A compositionally biased stretch (basic and acidic residues) spans 2275–2286 (RERRKLKRDSVR). Ser-2292 is modified (phosphoserine). The segment covering 2305–2317 (QQDGRGSQRGSSD) has biased composition (low complexity). Positions 2320-2345 (LVVELQREVALLRAQLALERKQRQDY) form a coiled coil. 2 positions are modified to phosphoserine; by NEK2: Ser-2389 and Ser-2393. Residues 2390-2414 (LNQSLTSPGPCLLHPSLDTTQNTHR) are disordered.

Monomer and homodimer. Forms a complex in vitro with both NEK2 kinase and the PPP1CC catalytic subunit of protein phosphatase 1 (PP1). Interacts with CEP135. Interacts with CROCC/rootletin. Interacts with CNTLN. Interacts with NIN (via C-terminus). Differentially phosphorylated during cell cycle. Phosphorylation may regulate association/dissociation from centrosome. During M phase of mitosis, C-terminal part is phosphorylated by NEK2, suggesting that it may trigger the dissociation from the mitotic centrosome. Dephosphorylated in vitro by the PP1 phosphatase. In terms of tissue distribution, expressed in the retina.

It localises to the cytoplasm. The protein resides in the perinuclear region. Its subcellular location is the cytoskeleton. The protein localises to the microtubule organizing center. It is found in the centrosome. It localises to the centriole. The protein resides in the cilium basal body. Its subcellular location is the cell projection. The protein localises to the cilium. It is found in the photoreceptor outer segment. It localises to the photoreceptor inner segment. Its function is as follows. Plays an important role in centrosome cohesion during interphase. Recruits CCDC102B to the proximal ends of centrioles. Maintains centrosome cohesion by forming intercentriolar linkages. Accumulates at the proximal end of each centriole, forming supramolecular assemblies with viscous material properties that promote organelle cohesion. May be involved in ciliogenesis. The sequence is that of Centrosome-associated protein CEP250 (Cep250) from Mus musculus (Mouse).